Consider the following 494-residue polypeptide: MTIRTRVAPSPTGDPHLGTAYIALFNYCFAKQQGGEFVLRIEDTDQVRSTAESEQAIMDSLRWLGLEWDHGPDVGGEFGPYRQSERSDLYKKYAHQLVDDGKAFYCFATSEELDKMREEQMAEGLRPKYDGRGLNHTDDEIKANLAAGKPYVIRMKIPSEGTFKFNDYLRDEIEIPWENVDMQVLLKADGFPTYFLANVVDDHHMQISHIFRGEEWINSAPKLLKLYEDFGWEAPVLGHLPLLRNPDKSKLSKRKNPTSINYYKEMGYLPEAVLNYLGRMGWSMPDEREKFTLNEMIENFDMKRVSLGGPVFDVDKLSWLNGMWIRENLTDEQLIQRFVDWKFNGEMLAKVLPEAKARINTLSDLVDLAGHFVGGIPTYDPALLTAGKADEDVIRQALQFFVWQLEGLRSFDKPAIFAIAKEVATFHELKIKDFLEPIFVAITGKTSSTSVLDAMEILGSDLSRARLRVALAHLGISKKQAKNIERAYREYPSA.

Positions 9 to 19 match the 'HIGH' region motif; that stretch reads PSPTGDPHLGT. A 'KMSKS' region motif is present at residues 250 to 254; it reads KLSKR. Lys253 is a binding site for ATP.

The protein belongs to the class-I aminoacyl-tRNA synthetase family. Glutamate--tRNA ligase type 1 subfamily. In terms of assembly, monomer.

Its subcellular location is the cytoplasm. The catalysed reaction is tRNA(Glu) + L-glutamate + ATP = L-glutamyl-tRNA(Glu) + AMP + diphosphate. Catalyzes the attachment of glutamate to tRNA(Glu) in a two-step reaction: glutamate is first activated by ATP to form Glu-AMP and then transferred to the acceptor end of tRNA(Glu). The protein is Glutamate--tRNA ligase of Pseudoalteromonas translucida (strain TAC 125).